The chain runs to 538 residues: MFRRNLITSAILLMAPLAFSAQSLAESLTVEQRLELLEKALRETQSELKKYKDEEKKKYTPATVNRSVSTNDQGYAANPFPTSSAAKPDAVLVKNEEKNASETGSIYSSMTLKDFSKFVKDEIGFSYNGYYRSGWGTASHGSPKSWAIGSLGRFGNEYSGWFDLQLKQRVYNENGKRVDAVVMIDGNVGQQYSTGWFGDNAGGENFMQFSDMYVTTKGFLPFAPEADFWVGKHGAPKIEIQMLDWKTQRTDAVTGVGLENWKVGPGKIDIALVREDVDDYDRSLQNKQQINTHTIDLRYKDIPLWDKATLMVSGRYVTANESASEKDNQDNNGYYDWKDTWMFGTSLTQKFDKGGFNEFSFLVANNSIARNFGRYAGASPFTTFNGRYYCDHTGGTAVRLTSQGEAYIGDHFIVANAIVYSFGNDIYSYETGAHSDFESIRAVVRPAYIWDQYNQTGVELGYFTQQNKDANSNKFNESGYKTTLFHTFKVNTSMLTSRLEIRFYATYIKALENELDGFTFEDNKDDQFAVGAQAEIWW.

Residues 1-25 (MFRRNLITSAILLMAPLAFSAQSLA) form the signal peptide. The tract at residues 52-82 (KDEEKKKYTPATVNRSVSTNDQGYAANPFPT) is disordered. Over residues 62-73 (ATVNRSVSTNDQ) the composition is skewed to polar residues.

It belongs to the porin LamB (TC 1.B.3) family.

The protein resides in the cell outer membrane. Functionally, may be a sugar porin with a broad carbohydrate specificity. This is Putative outer membrane porin BglH (bglH) from Shigella flexneri serotype 5b (strain 8401).